A 316-amino-acid polypeptide reads, in one-letter code: MTKEFHHVTVLLHETVDMLDIKPNGIYVDATLGGSGHSAYLLSKLSEQGHLYCFDQDQKAIDNAQVTLKSYIDKGQVTFIKDNFRHLKARLTALGVDEIDGILYDLGVSSPQLDERERGFSYKQDAPLDMRMDRQSLLTAYEVVNTYPFNDLVKIFFKYGEDKFSKQIARKIEQARAIKPIETTTELAELIKAAKPAKELKKKGHPAKQIFQAIRIEVNDELGAADESIQDAMELLALDGRISVITFHSLEDRLTKQLFKEASTVDVPKGLPLIPEDMKPTFELVSRKPILPSHSELTANKRAHSAKLRVAKKIRK.

S-adenosyl-L-methionine contacts are provided by residues 35-37, Asp-55, Phe-84, Asp-105, and Gln-112; that span reads SGH.

It belongs to the methyltransferase superfamily. RsmH family.

It is found in the cytoplasm. The enzyme catalyses cytidine(1402) in 16S rRNA + S-adenosyl-L-methionine = N(4)-methylcytidine(1402) in 16S rRNA + S-adenosyl-L-homocysteine + H(+). In terms of biological role, specifically methylates the N4 position of cytidine in position 1402 (C1402) of 16S rRNA. This is Ribosomal RNA small subunit methyltransferase H from Streptococcus pyogenes serotype M4 (strain MGAS10750).